Here is a 549-residue protein sequence, read N- to C-terminus: Glucose-6-phosphate isomerase (549 aa).

The active-site Proton donor is the E353. Residues H384 and K512 contribute to the active site.

Belongs to the GPI family.

It localises to the cytoplasm. It carries out the reaction alpha-D-glucose 6-phosphate = beta-D-fructose 6-phosphate. It participates in carbohydrate biosynthesis; gluconeogenesis. Its pathway is carbohydrate degradation; glycolysis; D-glyceraldehyde 3-phosphate and glycerone phosphate from D-glucose: step 2/4. Its function is as follows. Catalyzes the reversible isomerization of glucose-6-phosphate to fructose-6-phosphate. This chain is Glucose-6-phosphate isomerase, found in Solidesulfovibrio magneticus (strain ATCC 700980 / DSM 13731 / RS-1) (Desulfovibrio magneticus).